A 382-amino-acid chain; its full sequence is D-alanine--D-alanine ligase (382 aa).

One can recognise an ATP-grasp domain in the interval 139–348 (KRLMRDAGLP…PPALMDALIA (210 aa)). An ATP-binding site is contributed by 168 to 223 (EALESRTLFVKPANMGSSVGVSRVADAGQFDQALAHAFAYDEKILIERAVPRAREI). The Mg(2+) site is built by aspartate 300, glutamate 315, and asparagine 317.

This sequence belongs to the D-alanine--D-alanine ligase family. Mg(2+) is required as a cofactor. Requires Mn(2+) as cofactor.

The protein localises to the cytoplasm. The catalysed reaction is 2 D-alanine + ATP = D-alanyl-D-alanine + ADP + phosphate + H(+). It participates in cell wall biogenesis; peptidoglycan biosynthesis. In terms of biological role, cell wall formation. The sequence is that of D-alanine--D-alanine ligase from Methylobacterium sp. (strain 4-46).